Consider the following 355-residue polypeptide: Apyrase apy-1 (355 aa).

The Cytoplasmic segment spans residues 1–6 (MTQESN). The chain crosses the membrane as a helical; Signal-anchor for type II membrane protein span at residues 7 to 29 (SNFFNFLLFGFVTAIAFYSGTQF). Asparagine 30 carries N-linked (GlcNAc...) asparagine glycosylation. Residues 30 to 355 (NKSSEQEEHI…PYKYEGIAFA (326 aa)) lie on the Lumenal side of the membrane. Residues serine 119, glutamate 166, and glutamate 235 each contribute to the Ca(2+) site. An N-linked (GlcNAc...) asparagine glycan is attached at asparagine 291. A Ca(2+)-binding site is contributed by glutamate 350.

It belongs to the apyrase family. It depends on Ca(2+) as a cofactor.

The protein localises to the endomembrane system. The catalysed reaction is a ribonucleoside 5'-diphosphate + H2O = a ribonucleoside 5'-phosphate + phosphate + H(+). Its function is as follows. Hydrolyzes UDP and to a lesser extent GDP. By preventing the accumulation of NDP, may promote the reglucosylation of incompletely folded glycoproteins in the endoplasmic reticulum following the unfolded protein response. The polypeptide is Apyrase apy-1 (Caenorhabditis elegans).